The sequence spans 627 residues: Carnitine O-acetyltransferase, mitochondrial (627 aa).

The Proton acceptor role is filled by histidine 336. CoA is bound by residues lysine 418 and 422–429 (KKFKVSPD). Residues tyrosine 451, serine 453, and threonine 464 each contribute to the (R)-carnitine site. Glutamine 553 serves as a coordination point for CoA. The Microbody targeting signal motif lies at 625 to 627 (PKL).

It belongs to the carnitine/choline acetyltransferase family.

The protein localises to the peroxisome. It localises to the mitochondrion inner membrane. It catalyses the reaction (R)-carnitine + acetyl-CoA = O-acetyl-(R)-carnitine + CoA. Its function is as follows. Carnitine acetylase is specific for short chain fatty acids. Carnitine acetylase seems to affect the flux through the pyruvate dehydrogenase complex. It may be involved as well in the transport of acetyl-CoA into mitochondria. This Candida tropicalis (Yeast) protein is Carnitine O-acetyltransferase, mitochondrial (CAT2).